The primary structure comprises 616 residues: Tumor necrosis factor receptor superfamily member 11A (616 aa).

The first 29 residues, 1 to 29 (MAPRARRRRPLFALLLLCALLARLQVALQ), serve as a signal peptide directing secretion. The Extracellular portion of the chain corresponds to 30-212 (IAPPCTSEKH…PPNEPHVYLP (183 aa)). 9 disulfide bridges follow: cysteine 34–cysteine 46, cysteine 47–cysteine 60, cysteine 50–cysteine 68, cysteine 71–cysteine 86, cysteine 92–cysteine 112, cysteine 114–cysteine 127, cysteine 124–cysteine 126, cysteine 133–cysteine 151, and cysteine 154–cysteine 169. TNFR-Cys repeat units lie at residues 34 to 68 (CTSE…DSVC), 71 to 112 (CGPD…PRRC), 114 to 151 (CTAG…DTVC), and 154 to 194 (CLAG…DAVC). Asparagine 105 carries N-linked (GlcNAc...) asparagine glycosylation. The Na(+) site is built by cysteine 133, alanine 134, and serine 160. Asparagine 174 is a glycosylation site (N-linked (GlcNAc...) asparagine). Cysteines 175 and 194 form a disulfide. A helical transmembrane segment spans residues 213 to 233 (GLIILLLFASVALVAAIIFGV). Over 234–616 (CYRKKGKALT…PVQEQGGAKA (383 aa)) the chain is Cytoplasmic. The tract at residues 468 to 536 (PLPQCAYGMG…GNSNSTFISS (69 aa)) is disordered. Over residues 483 to 493 (EASRTEARDQP) the composition is skewed to basic and acidic residues. Low complexity predominate over residues 499 to 508 (GRLPSSARAG). The span at 524–536 (NVTGNSNSTFISS) shows a compositional bias: polar residues. The interval 544 to 549 (GDIIVV) is required for interaction with EEIG1 and osteoclast differentiation. The disordered stretch occupies residues 556-616 (QEGAAAAAEP…PVQEQGGAKA (61 aa)). Over residues 570–580 (VQEETLARRDS) the composition is skewed to basic and acidic residues. Residue serine 580 is modified to Phosphoserine.

Binds to the clefts between the subunits of the TNFSF11 ligand trimer to form a heterohexamer. Part of a complex composed of EEIG1, TNFRSF11A/RANK, PLCG2, GAB2, TEC and BTK; complex formation increases in the presence of TNFSF11/RANKL. Interacts with TRAF1, TRAF2, TRAF3, TRAF5 and TRAF6. Interacts (via cytoplasmic domain) with GAB2. Interacts (via cytoplasmic domain); with EEIG1 (via N-terminus); when in the presence of TNFSF11/RANKL. Ubiquitous expression with high levels in skeletal muscle, thymus, liver, colon, small intestine and adrenal gland.

The protein resides in the cell membrane. It is found in the membrane raft. In terms of biological role, receptor for TNFSF11/RANKL/TRANCE/OPGL; essential for RANKL-mediated osteoclastogenesis. Its interaction with EEIG1 promotes osteoclastogenesis via facilitating the transcription of NFATC1 and activation of PLCG2. Involved in the regulation of interactions between T-cells and dendritic cells. This Homo sapiens (Human) protein is Tumor necrosis factor receptor superfamily member 11A (TNFRSF11A).